A 198-amino-acid chain; its full sequence is uncharacterized protein (198 aa).

This is an uncharacterized protein from Homo sapiens (Human).